We begin with the raw amino-acid sequence, 198 residues long: Recombination protein RecR (198 aa).

The C4-type zinc finger occupies 56–71 (CDICGNVSEEPTCRIC). Positions 79–175 (AVVCVVEEPK…NVTRLASGLP (97 aa)) constitute a Toprim domain.

The protein belongs to the RecR family.

May play a role in DNA repair. It seems to be involved in an RecBC-independent recombinational process of DNA repair. It may act with RecF and RecO. In Saccharopolyspora erythraea (strain ATCC 11635 / DSM 40517 / JCM 4748 / NBRC 13426 / NCIMB 8594 / NRRL 2338), this protein is Recombination protein RecR.